The sequence spans 660 residues: Histone deacetylase 5 (660 aa).

Ala-2 bears the N-acetylalanine mark. Residues 26–349 (KVGLIYDETM…SLACVQVLLE (324 aa)) form a histone deacetylase region. His-158 (proton donor/acceptor) is an active-site residue. Zn(2+) contacts are provided by Asp-198, His-200, and Asp-291.

The protein belongs to the histone deacetylase family. HD type 2 subfamily. As to quaternary structure, interacts with HDA6. Requires Zn(2+) as cofactor. Expressed in stems, leaves, flowers, siliques and mature seeds.

It is found in the nucleus. It localises to the cytoplasm. The enzyme catalyses N(6)-acetyl-L-lysyl-[histone] + H2O = L-lysyl-[histone] + acetate. With respect to regulation, inhibited by trichostatin A (TSA), a well-known histone deacetylase inhibitor. Responsible for the deacetylation of lysine residues on the N-terminal part of the core histones (H2A, H2B, H3 and H4). Histone deacetylation gives a tag for epigenetic repression and plays an important role in transcriptional regulation, cell cycle progression and developmental events. Histone deacetylases act via the formation of large multiprotein complexes. Involved in the regulation of flowering time by repressing FLC and AGL27/MAF1 expression. Forms a histone deacetylase complex with HDA6, FLD and MSI4/FVE that represses FLC gene expression to control flowering time. Unlike its tandem duplication HDA18, HDA5 does not seem to be required for the cellular patterning in the root epidermis. The sequence is that of Histone deacetylase 5 from Arabidopsis thaliana (Mouse-ear cress).